The primary structure comprises 159 residues: Transcriptional repressor NrdR (159 aa).

A disordered region spans residues 1-21 (MRCPKCQHNKSNVIDSRQAED). A zinc finger lies at 3-34 (CPKCQHNKSNVIDSRQAEDGNTIRRRRECDAC). In terms of domain architecture, ATP-cone spans 49 to 139 (LLVVKKDGTR…VYRSFKDVDE (91 aa)).

It belongs to the NrdR family. The cofactor is Zn(2+).

In terms of biological role, negatively regulates transcription of bacterial ribonucleotide reductase nrd genes and operons by binding to NrdR-boxes. This is Transcriptional repressor NrdR from Streptococcus thermophilus (strain CNRZ 1066).